A 75-amino-acid chain; its full sequence is Caerin 1.11 (75 aa).

The signal sequence occupies residues 1–22; sequence MASLKKSLFLVLFLGFVSVSIC. Positions 23 to 49 are excised as a propeptide; that stretch reads EEEKRQEDEDEHEEEGENQEEGSEEKR. A disordered region spans residues 24–48; it reads EEKRQEDEDEHEEEGENQEEGSEEK. The segment covering 30–45 has biased composition (acidic residues); it reads DEDEHEEEGENQEEGS. Leu74 bears the Leucine amide mark.

Belongs to the frog skin active peptide (FSAP) family. Caerin subfamily. In terms of tissue distribution, expressed by the skin glands.

It localises to the secreted. Its subcellular location is the target cell membrane. Its function is as follows. Cationic amphipathic alpha-helical antimicrobial peptide with weak or no activity against both Gram-positive and Gram-negative bacteria. Is weakly active against E.coli (MIC=25 uM), E.cloacae (MIC=50 uM), K.pneumoniae (MIC=25 uM), and S.haemolyticus (MIC=50 uM). Has no activity against S.typhimurium, S.enteritidis, B.megaterium, and S.aureus (MIC&gt;100 uM). This is Caerin 1.11 from Ranoidea caerulea (Green tree frog).